A 560-amino-acid chain; its full sequence is Formate--tetrahydrofolate ligase (560 aa).

Residue 69 to 76 (TPAGEGKS) participates in ATP binding.

This sequence belongs to the formate--tetrahydrofolate ligase family.

The catalysed reaction is (6S)-5,6,7,8-tetrahydrofolate + formate + ATP = (6R)-10-formyltetrahydrofolate + ADP + phosphate. It functions in the pathway one-carbon metabolism; tetrahydrofolate interconversion. This chain is Formate--tetrahydrofolate ligase, found in Listeria monocytogenes serotype 4a (strain HCC23).